The chain runs to 500 residues: Na(+)/H(+) antiporter NhaB (500 aa).

Helical transmembrane passes span 28 to 50 (FLLL…VLVG), 68 to 88 (GGLL…ALYA), 98 to 118 (LLLM…LLLF), 121 to 141 (LLLG…LAAL), 145 to 165 (FLDA…FFAV), 205 to 225 (LLMH…VGEP), 244 to 264 (QVAP…VLLE), 311 to 331 (VLIV…LLVI), 350 to 370 (FQEA…VAVI), 394 to 414 (MLFI…VATI), 449 to 469 (VATP…IAPL), and 477 to 497 (MVWM…WAVS).

It belongs to the NhaB Na(+)/H(+) (TC 2.A.34) antiporter family.

Its subcellular location is the cell inner membrane. It catalyses the reaction 2 Na(+)(in) + 3 H(+)(out) = 2 Na(+)(out) + 3 H(+)(in). Its function is as follows. Na(+)/H(+) antiporter that extrudes sodium in exchange for external protons. This chain is Na(+)/H(+) antiporter NhaB, found in Pseudomonas aeruginosa (strain LESB58).